The sequence spans 627 residues: MSAADANQVQESLEKLNLDSAPVASTEETEQTASGETEEAADSAQVSDTSASLYVGELNPSVNEALLFEIFSPIGQVASIRVCRDAVTKKSLGYAYVNFHKFEDGEKAIEDLNYSLIEGRPCRIMWSQRDPSLRRNGDGNIFIKNLHPAIDNKALHDTFTAFGKILSCKVATDDMGISKCFGFVHYETAEAAEAAIENVNGMLLNDREVYVGKHISKKDRESKFEEMKANFTNVYAKNIDLDFSEEEFKKLFEAYGKITSIYLEKDHEGKSKGFGFVNFENHESAVKAVDELNDKEINGQKIYVGRAQKKRERLEELKKQYENTRLEKLSKYQGVNLFIKNLDDTIDSEKLEEEFKPFGSITSARVMVDETGKSKGFGFVCFSSPEEATKAITEMNQRMIYGKPLYVALAQRKDVRRSQLEQQIQARNQMRMQNAAATGGIPGQFIPPMFYGQQPGFFPPNGRGNGPFPGPNPQMMMPRGQIPPPQGQWPRPGPNGQPVPVYGMPPVYGGDFNNGANGGRQQRGYYPNRNQNQKGRQQKDLAAIIANAPADQQKRILGEELYPKIVSTGKAQEPEAAGKITGMMLDLDNEEILALLEDDELFNTHFEDALTAFEEYKKSSEAATAEN.

Polar residues predominate over residues 1–11 (MSAADANQVQE). A disordered region spans residues 1–46 (MSAADANQVQESLEKLNLDSAPVASTEETEQTASGETEEAADSAQV). RRM domains are found at residues 51–129 (ASLY…WSQR), 139–216 (GNIF…KHIS), 232–309 (TNVY…RAQK), and 335–412 (VNLF…LAQR). Positions 511–535 (DFNNGANGGRQQRGYYPNRNQNQKG) are enriched in low complexity. The segment at 511 to 537 (DFNNGANGGRQQRGYYPNRNQNQKGRQ) is disordered. The 82-residue stretch at 537 to 618 (QQKDLAAIIA…ALTAFEEYKK (82 aa)) folds into the PABC domain.

Belongs to the polyadenylate-binding protein type-1 family.

The protein resides in the cytoplasm. It localises to the nucleus. Functionally, binds the poly(A) tail of mRNA. Appears to be an important mediator of the multiple roles of the poly(A) tail in mRNA biogenesis, stability and translation. In the nucleus, involved in both mRNA cleavage and polyadenylation. Is also required for efficient mRNA export to the cytoplasm. Acts in concert with a poly(A)-specific nuclease (PAN) to affect poly(A) tail shortening, which may occur concomitantly with either nucleocytoplasmic mRNA transport or translational initiation. In the cytoplasm, stimulates translation initiation and regulates mRNA decay through translation termination-coupled poly(A) shortening, probably mediated by PAN. The protein is Polyadenylate-binding protein, cytoplasmic and nuclear (PAB1) of Debaryomyces hansenii (strain ATCC 36239 / CBS 767 / BCRC 21394 / JCM 1990 / NBRC 0083 / IGC 2968) (Yeast).